Consider the following 243-residue polypeptide: Terpene cyclase dpasB (243 aa).

The next 7 helical transmembrane spans lie at 16-36 (VVWVTDVCKLVMAVGWLSNYI), 50-70 (MALMPLCCNFAWEFTYFFIYP), 79-99 (IHTLAFLLNCGVMYTAVRYGA), 112-132 (LPVIFVVCIACWVSAHVAFAE), 141-161 (AVSGFACQILLSAGGTCQLLC), 172-189 (LWLARFMGSFALILPNML), and 207-227 (IWFLGMFLFLDGSYGFVLWYV).

This sequence belongs to the paxB family.

Its subcellular location is the membrane. It participates in secondary metabolite biosynthesis; terpenoid biosynthesis. In terms of biological role, terpene cyclase; part of the gene cluster that mediates the biosynthesis of the diterpenoid pyrones subglutinols A and B. The first step of the pathway is the synthesis of the alpha-pyrone moiety by the polyketide synthase dpasA via condensation of one acetyl-CoA starter unit with 3 malonyl-CoA units and 2 methylations. The alpha-pyrone is then combined with geranylgeranyl pyrophosphate (GGPP) formed by the GGPP synthase dpasD through the action of the prenyltransferase dpasC to yield a linear alpha-pyrone diterpenoid. Subsequent steps in the diterpenoid pyrone biosynthetic pathway involve the decalin core formation, which is initiated by the epoxidation of the C10-C11 olefin by the FAD-dependent oxidoreductase dpasE, and is followed by a cyclization cascade catalyzed by the terpene cyclase dpasB. The FAD-linked oxidoreductase dpasF is then involved in tetrahydrofuran (THF) ring formation at the C5 unit to complete the formation of subglutinols A and B. DpasF possesses also an additional catalytic ability of multi-step oxidations to generate a new DDP analog with an enone system at the C5 named FDDP A. This Apiospora sacchari (Arthrinium sacchari) protein is Terpene cyclase dpasB.